A 1588-amino-acid polypeptide reads, in one-letter code: Centrosomal protein of 170 kDa (1588 aa).

Positions 23–73 constitute an FHA domain; the sequence is IFVGRDDCELMLQSRSVDKQHAVINYDASMDEHLVKDLGSLNGTFVNDVRI. Disordered regions lie at residues 121 to 172, 299 to 323, 338 to 447, and 461 to 508; these read LSQK…MPRG, KFTS…GIQT, QNNP…EEPS, and SGSL…NPNS. Ser141 carries the post-translational modification Phosphoserine. The span at 155–164 shows a compositional bias: basic and acidic residues; it reads EALKSEEKPM. Over residues 347-357 the composition is skewed to basic and acidic residues; sequence ERTEEDSKSIK. Phosphoserine occurs at positions 355 and 358. Tyr363 bears the Phosphotyrosine mark. Positions 407–418 are enriched in basic and acidic residues; it reads KKKAQSTEKHQE. Ser443, Ser463, and Ser494 each carry phosphoserine. The residue at position 498 (Thr498) is a Phosphothreonine. Residues Ser568, Ser577, Ser628, and Ser631 each carry the phosphoserine modification. Positions 602–854 are disordered; the sequence is ELSATVENET…PHINKQNSSV (253 aa). The segment covering 620 to 631 has biased composition (polar residues); it reads LRSTSCTTSLAS. Thr639 is subject to Phosphothreonine. The segment covering 645–654 has biased composition (basic and acidic residues); sequence NEEKLLESSR. A Phosphoserine modification is found at Ser662. The segment covering 663-691 has biased composition (basic and acidic residues); sequence EIGEKQDTELQEKEAQVYQSEKHDADRGL. Ser718 is subject to Phosphoserine. A compositionally biased stretch (basic and acidic residues) spans 720 to 731; sequence SKEKSETEKETS. Thr752 is modified (phosphothreonine). Composition is skewed to basic and acidic residues over residues 764–774 and 789–821; these read HIDKCREESSK and SKGD…KESS. The segment covering 822–839 has biased composition (polar residues); the sequence is KSLVRQGSFTIDKPSSNI. Residues Ser829, Ser870, and Ser872 each carry the phosphoserine modification. A targeting to microtubules region spans residues 844 to 1588; the sequence is IPHINKQNSS…GEEEDVTVHE (745 aa). Over residues 899–908 the composition is skewed to basic and acidic residues; it reads LREDNNKTDE. Disordered regions lie at residues 899-1222 and 1228-1247; these read LRED…RWRR and ASTS…HTRL. A phosphothreonine mark is found at Thr906 and Thr912. The segment covering 913–937 has biased composition (polar residues); it reads PSYNRDNSISPESDVDTASTISLVT. Phosphoserine is present on residues Ser922, Ser925, and Ser950. Over residues 967–980 the composition is skewed to basic and acidic residues; the sequence is DVTKSGSREKIEKK. Position 1008 is a phosphoserine (Ser1008). A Phosphothreonine modification is found at Thr1012. The segment covering 1028 to 1038 has biased composition (polar residues); the sequence is IMSSDQETYSC. A Phosphothreonine modification is found at Thr1047. Ser1048 is subject to Phosphoserine. Positions 1049-1062 are enriched in basic and acidic residues; the sequence is ADEHNIHSKLEGGK. Residues 1075-1093 are compositionally biased toward low complexity; that stretch reads STSKSTTLPRPRPTRTSLL. Residues Ser1102, Ser1104, Ser1122, Ser1123, Ser1135, Ser1150, and Ser1155 each carry the phosphoserine modification. The targeting to centrosomes stretch occupies residues 1103-1588; that stretch reads DSELADADKA…GEEEDVTVHE (486 aa). Positions 1112 to 1128 are enriched in low complexity; sequence ASVASEVSTTSSTSKPP. A compositionally biased stretch (low complexity) spans 1158-1173; that stretch reads EATISRSSASARTAEA. Residues Ser1188, Ser1195, Ser1200, Ser1229, Ser1231, Ser1241, Ser1260, and Ser1270 each carry the phosphoserine modification. A compositionally biased stretch (polar residues) spans 1191–1218; sequence TRANSISRLSDSKVKSMSSTHGSPSVNS. The segment at 1315–1334 is disordered; that stretch reads SVTSSGTAPSTTVSTAATTP. A Phosphoserine modification is found at Ser1362. The interval 1370–1398 is disordered; it reads PLVHSKTPEGNNGRSVDSRPQPAEHPDHL. The stretch at 1467–1495 forms a coiled coil; it reads KTSSMEISSILQELKRVEKQLQVINAMID. Residues 1511–1540 are disordered; it reads AILPSPPKQKSSPVNNHSSPSQTPALCPPE. Polar residues predominate over residues 1518-1534; sequence KQKSSPVNNHSSPSQTP. Phosphoserine is present on residues Ser1521 and Ser1522.

This sequence belongs to the CEP170 family. In terms of assembly, interacts with CCDC68 and CCDC120; leading to recruitment to centrosomes. Interacts with PLK1. Interacts with NIN. Interacts with FHDC1. Interacts with CCDC61. Interacts with TBK1; efficient complex formation may be dependent on the presence of CCDC61. In terms of processing, phosphorylated; probably by PLK1.

It localises to the cytoplasm. The protein resides in the cytoskeleton. It is found in the microtubule organizing center. The protein localises to the centrosome. Its subcellular location is the centriole. It localises to the spindle. Functionally, plays a role in microtubule organization. Required for centriole subdistal appendage assembly. This is Centrosomal protein of 170 kDa (Cep170) from Mus musculus (Mouse).